A 488-amino-acid polypeptide reads, in one-letter code: N-succinylglutamate 5-semialdehyde dehydrogenase (488 aa).

Position 221–226 (221–226 (GSSRTG)) interacts with NAD(+). Catalysis depends on residues glutamate 244 and cysteine 278.

Belongs to the aldehyde dehydrogenase family. AstD subfamily.

The enzyme catalyses N-succinyl-L-glutamate 5-semialdehyde + NAD(+) + H2O = N-succinyl-L-glutamate + NADH + 2 H(+). Its pathway is amino-acid degradation; L-arginine degradation via AST pathway; L-glutamate and succinate from L-arginine: step 4/5. Catalyzes the NAD-dependent reduction of succinylglutamate semialdehyde into succinylglutamate. The sequence is that of N-succinylglutamate 5-semialdehyde dehydrogenase from Pseudomonas savastanoi pv. phaseolicola (strain 1448A / Race 6) (Pseudomonas syringae pv. phaseolicola (strain 1448A / Race 6)).